The chain runs to 250 residues: 2,3-bisphosphoglycerate-dependent phosphoglycerate mutase (250 aa).

Substrate-binding positions include 8-15 (RHGESTWN), 21-22 (TG), arginine 60, 87-90 (ERHY), lysine 98, and 114-115 (RR). The Tele-phosphohistidine intermediate role is filled by histidine 9. Glutamate 87 functions as the Proton donor/acceptor in the catalytic mechanism. Residues 116–135 (SYDTPPPPLAANDPRSERSD) form a disordered region. Residue 183–184 (GN) participates in substrate binding.

Belongs to the phosphoglycerate mutase family. BPG-dependent PGAM subfamily. Homodimer.

The enzyme catalyses (2R)-2-phosphoglycerate = (2R)-3-phosphoglycerate. It participates in carbohydrate degradation; glycolysis; pyruvate from D-glyceraldehyde 3-phosphate: step 3/5. In terms of biological role, catalyzes the interconversion of 2-phosphoglycerate and 3-phosphoglycerate. This chain is 2,3-bisphosphoglycerate-dependent phosphoglycerate mutase, found in Polaromonas naphthalenivorans (strain CJ2).